The chain runs to 505 residues: MDASVSLLPEGESLHRSLSASQIQMLAFGGIIGTGLFLGIGSSLAESGPASLLISFSVLGVSVYCTMLALGEMSVYMPVAGSFCTYVGRYVDEALSFSLTWNYWLNDTIALASHVLATRLVVDFWLIPTEGDPVSASLSLPPWKEAVRIITPITSLSANIILNMLPVGGFGEIEYWLSSIKVFTVAAFIVNGILCNLGVNNEKKFIGFRYWKDPGAFNNGIIGVISSFVNAAFAYAGTESIALTAGEAKSPITTLPKAIRFTAHRVLLLYIISVLVVGINLPYNTPGLDGDSVRMSPFTFVFKKFGVPGAASIMNLVILSSALSAGNHSLYAGTRLLYSLAKSGHAPKVFSKCNKHGIPWLSVLATSATAILCLMSSQAGKTWGFLLNVIAVSNQISWIFIAVSSLRFRKALRVQGKTHRLYFPNWTYPVGPYIIILLNGVFLFLQGYKSLYPFRLSLFVSYYMEIPIVLGLYLIWKIYKKTKLVSSSEADLETDWKSLEDTDSA.

11 helical membrane-spanning segments follow: residues 25 to 45 (MLAF…SSLA), 50 to 70 (ASLL…MLAL), 149 to 169 (IITP…PVGG), 175 to 195 (YWLS…GILC), 221 to 241 (IIGV…TESI), 266 to 286 (VLLL…YNTP), 305 to 325 (FGVP…ALSA), 357 to 377 (GIPW…LMSS), 383 to 403 (WGFL…FIAV), 425 to 445 (NWTY…FLFL), and 456 to 476 (LSLF…YLIW).

The protein belongs to the amino acid-polyamine-organocation (APC) superfamily.

The protein localises to the membrane. The chain is Probable amino-acid permease PB1C11.02 from Schizosaccharomyces pombe (strain 972 / ATCC 24843) (Fission yeast).